Reading from the N-terminus, the 361-residue chain is Replication factor C subunit 3 (361 aa).

Residues 1–28 (MAGATAATPMDIDAAAPPPGAAAKGKAP) are compositionally biased toward low complexity. The tract at residues 1–39 (MAGATAATPMDIDAAAPPPGAAAKGKAPLSSTPGGRAAP) is disordered. Residue 77 to 84 (YGPPGTGK) coordinates ATP.

It belongs to the activator 1 small subunits family. Heterotetramer of subunits RFC2, RFC3, RFC4 and RFC5 that can form a complex with RFC1. In terms of tissue distribution, expressed in roots, leaves, shoot apical meristem (SAM), flag leaves and panicles.

It is found in the nucleus. In terms of biological role, may be involved in DNA replication and thus regulate cell proliferation. This chain is Replication factor C subunit 3 (RFC3), found in Oryza sativa subsp. japonica (Rice).